A 464-amino-acid polypeptide reads, in one-letter code: 3-isopropylmalate dehydratase large subunit (464 aa).

[4Fe-4S] cluster contacts are provided by cysteine 337, cysteine 397, and cysteine 400.

The protein belongs to the aconitase/IPM isomerase family. LeuC type 1 subfamily. In terms of assembly, heterodimer of LeuC and LeuD. [4Fe-4S] cluster is required as a cofactor.

It carries out the reaction (2R,3S)-3-isopropylmalate = (2S)-2-isopropylmalate. Its pathway is amino-acid biosynthesis; L-leucine biosynthesis; L-leucine from 3-methyl-2-oxobutanoate: step 2/4. Its function is as follows. Catalyzes the isomerization between 2-isopropylmalate and 3-isopropylmalate, via the formation of 2-isopropylmaleate. This is 3-isopropylmalate dehydratase large subunit from Bacillus cereus (strain AH820).